The chain runs to 360 residues: Nucleoporin SEH1 (360 aa).

6 WD repeats span residues 10-49 (DHKD…DWHC), 55-96 (THSG…SNDK), 111-152 (DSRT…NLSQ), 160-210 (SCKL…RKYA), 217-258 (TVTD…KELT), and 276-315 (NHNS…NWKC). A Glycyl lysine isopeptide (Lys-Gly) (interchain with G-Cter in SUMO2) cross-link involves residue Lys12. Phosphoserine occurs at positions 179 and 190. Residues 324-354 (SPVNGSSQQGTSNPSLGSNIPSLQNSLNGSS) show a composition bias toward polar residues. A disordered region spans residues 324-360 (SPVNGSSQQGTSNPSLGSNIPSLQNSLNGSSAGRKHS).

Belongs to the WD repeat SEC13 family. In terms of assembly, component of the Nup107-160 subcomplex of the nuclear pore complex (NPC). The Nup107-160 subcomplex includes NUP160, NUP133, NUP107, NUP98, NUP85, NUP43, NUP37, SEH1 and SEC13. The SEH1 subunit appears to be only weakly associated with the Nup107-160 subcomplex. Component of the GATOR2 subcomplex, composed of MIOS, SEC13, SEH1L, WDR24 and WDR59. The GATOR2 complex interacts with CASTOR1 and CASTOR2; the interaction is negatively regulated by arginine. The GATOR2 complex interacts with SESN1, SESN2 and SESN3; the interaction is negatively regulated by amino acids. SESN1, SESN2 and SESN3 convey leucine availability via direct interaction with SEH1L and WDR24.

It is found in the chromosome. It localises to the centromere. The protein localises to the kinetochore. The protein resides in the nucleus. Its subcellular location is the nuclear pore complex. It is found in the lysosome membrane. The GATOR2 complex is negatively regulated by the upstream amino acid sensors CASTOR1 and SESN2, which sequester the GATOR2 complex in absence of amino acids. In the presence of abundant amino acids, GATOR2 is released from CASTOR1 and SESN2 and activated. Component of the Nup107-160 subcomplex of the nuclear pore complex (NPC). The Nup107-160 subcomplex is required for the assembly of a functional NPC. The Nup107-160 subcomplex is also required for normal kinetochore microtubule attachment, mitotic progression and chromosome segregation. This subunit plays a role in recruitment of the Nup107-160 subcomplex to the kinetochore. Functionally, as a component of the GATOR2 complex, functions as an activator of the amino acid-sensing branch of the mTORC1 signaling pathway. The GATOR2 complex indirectly activates mTORC1 through the inhibition of the GATOR1 subcomplex. GATOR2 probably acts as an E3 ubiquitin-protein ligase toward GATOR1. In the presence of abundant amino acids, the GATOR2 complex mediates ubiquitination of the NPRL2 core component of the GATOR1 complex, leading to GATOR1 inactivation. In the absence of amino acids, GATOR2 is inhibited, activating the GATOR1 complex. Within the GATOR2 complex, SEC13 and SEH1L are required to stabilize the complex. This is Nucleoporin SEH1 (SEH1L) from Pongo abelii (Sumatran orangutan).